Consider the following 64-residue polypeptide: Ferredoxin-like protein in nif region (64 aa).

A 4Fe-4S ferredoxin-type domain is found at 2 to 30; that stretch reads AFKIIASQCTQCGACEFECPSNAIELKGE. [4Fe-4S] cluster is bound by residues C10, C13, C16, C20, C39, C42, C51, and C55.

It depends on [4Fe-4S] cluster as a cofactor.

The protein is Ferredoxin-like protein in nif region (fdxN) of Sinorhizobium fredii (strain NBRC 101917 / NGR234).